The sequence spans 407 residues: Tyrosine--tRNA ligase (407 aa).

Tyrosine 35 provides a ligand contact to L-tyrosine. Positions 40 to 49 match the 'HIGH' region motif; it reads PTADSLHVGH. Positions 168 and 172 each coordinate L-tyrosine. The 'KMSKS' region motif lies at 228 to 232; the sequence is KMGKT. Residue lysine 231 coordinates ATP. In terms of domain architecture, S4 RNA-binding spans 341–405; it reads NSLVDLLAKC…RGKKNFNRIV (65 aa).

It belongs to the class-I aminoacyl-tRNA synthetase family. TyrS type 1 subfamily. Homodimer.

Its subcellular location is the cytoplasm. It carries out the reaction tRNA(Tyr) + L-tyrosine + ATP = L-tyrosyl-tRNA(Tyr) + AMP + diphosphate + H(+). In terms of biological role, catalyzes the attachment of tyrosine to tRNA(Tyr) in a two-step reaction: tyrosine is first activated by ATP to form Tyr-AMP and then transferred to the acceptor end of tRNA(Tyr). In Clostridium botulinum (strain Loch Maree / Type A3), this protein is Tyrosine--tRNA ligase.